We begin with the raw amino-acid sequence, 529 residues long: Bifunctional purine biosynthesis protein PurH (529 aa).

The region spanning 2 to 149 is the MGS-like domain; sequence TNLVPVGRAL…KNHRFVNVVT (148 aa).

The protein belongs to the PurH family.

It carries out the reaction (6R)-10-formyltetrahydrofolate + 5-amino-1-(5-phospho-beta-D-ribosyl)imidazole-4-carboxamide = 5-formamido-1-(5-phospho-D-ribosyl)imidazole-4-carboxamide + (6S)-5,6,7,8-tetrahydrofolate. It catalyses the reaction IMP + H2O = 5-formamido-1-(5-phospho-D-ribosyl)imidazole-4-carboxamide. Its pathway is purine metabolism; IMP biosynthesis via de novo pathway; 5-formamido-1-(5-phospho-D-ribosyl)imidazole-4-carboxamide from 5-amino-1-(5-phospho-D-ribosyl)imidazole-4-carboxamide (10-formyl THF route): step 1/1. The protein operates within purine metabolism; IMP biosynthesis via de novo pathway; IMP from 5-formamido-1-(5-phospho-D-ribosyl)imidazole-4-carboxamide: step 1/1. The protein is Bifunctional purine biosynthesis protein PurH of Cereibacter sphaeroides (strain ATCC 17029 / ATH 2.4.9) (Rhodobacter sphaeroides).